Reading from the N-terminus, the 230-residue chain is Proteasome subunit beta 2 (230 aa).

Over residues 1–10 (MHDPENRLTD) the composition is skewed to basic and acidic residues. A disordered region spans residues 1 to 29 (MHDPENRLTDAYEPEVGNLPNEDSGRDEE). The propeptide at 1–35 (MHDPENRLTDAYEPEVGNLPNEDSGRDEENVVKTG) is removed in mature form; by autocatalysis. Residue threonine 36 is the Nucleophile of the active site.

The protein belongs to the peptidase T1B family. In terms of assembly, the 20S proteasome core is composed of 14 alpha and 14 beta subunits that assemble into four stacked heptameric rings, resulting in a barrel-shaped structure. The two inner rings, each composed of seven catalytic beta subunits, are sandwiched by two outer rings, each composed of seven alpha subunits. The catalytic chamber with the active sites is on the inside of the barrel. Has a gated structure, the ends of the cylinder being occluded by the N-termini of the alpha-subunits. Is capped at one or both ends by the proteasome regulatory ATPase, PAN.

Its subcellular location is the cytoplasm. It catalyses the reaction Cleavage of peptide bonds with very broad specificity.. The formation of the proteasomal ATPase PAN-20S proteasome complex, via the docking of the C-termini of PAN into the intersubunit pockets in the alpha-rings, triggers opening of the gate for substrate entry. Interconversion between the open-gate and close-gate conformations leads to a dynamic regulation of the 20S proteasome proteolysis activity. Component of the proteasome core, a large protease complex with broad specificity involved in protein degradation. In Haloarcula marismortui (strain ATCC 43049 / DSM 3752 / JCM 8966 / VKM B-1809) (Halobacterium marismortui), this protein is Proteasome subunit beta 2.